A 555-amino-acid polypeptide reads, in one-letter code: 2-isopropylmalate synthase (555 aa).

The Pyruvate carboxyltransferase domain occupies 30-303 (PIWCSVDLRD…DPGLDCTDIN (274 aa)). Residues Asp39, His242, His244, and Asn278 each coordinate Mg(2+). Residues 437–555 (QPDARIKFVD…VSAANRVIAK (119 aa)) form a regulatory domain region.

The protein belongs to the alpha-IPM synthase/homocitrate synthase family. LeuA type 2 subfamily. In terms of assembly, homodimer. Requires Mg(2+) as cofactor.

Its subcellular location is the cytoplasm. The enzyme catalyses 3-methyl-2-oxobutanoate + acetyl-CoA + H2O = (2S)-2-isopropylmalate + CoA + H(+). Its pathway is amino-acid biosynthesis; L-leucine biosynthesis; L-leucine from 3-methyl-2-oxobutanoate: step 1/4. In terms of biological role, catalyzes the condensation of the acetyl group of acetyl-CoA with 3-methyl-2-oxobutanoate (2-ketoisovalerate) to form 3-carboxy-3-hydroxy-4-methylpentanoate (2-isopropylmalate). The chain is 2-isopropylmalate synthase from Brucella suis biovar 1 (strain 1330).